The chain runs to 701 residues: Polyribonucleotide nucleotidyltransferase (701 aa).

D487 and D493 together coordinate Mg(2+). Residues P554–I613 enclose the KH domain. The region spanning G623–K691 is the S1 motif domain.

It belongs to the polyribonucleotide nucleotidyltransferase family. Component of the RNA degradosome, which is a multiprotein complex involved in RNA processing and mRNA degradation. Requires Mg(2+) as cofactor.

Its subcellular location is the cytoplasm. The enzyme catalyses RNA(n+1) + phosphate = RNA(n) + a ribonucleoside 5'-diphosphate. Involved in mRNA degradation. Catalyzes the phosphorolysis of single-stranded polyribonucleotides processively in the 3'- to 5'-direction. This chain is Polyribonucleotide nucleotidyltransferase, found in Pseudomonas putida (strain ATCC 47054 / DSM 6125 / CFBP 8728 / NCIMB 11950 / KT2440).